The following is an 841-amino-acid chain: Microcephalin (841 aa).

The BRCT 1 domain maps to 1–93 (MAAPILKDVV…AHIDESLFPA (93 aa)). Residues serine 278, serine 286, serine 295, and serine 332 each carry the phosphoserine modification. Phosphothreonine is present on threonine 334. Disordered regions lie at residues 340-375 (GHLL…RKRS), 417-445 (PDNL…SCRS), 481-507 (SSPQ…SAPE), and 562-593 (VGLK…PRSV). The segment covering 342–358 (LLIHSRPRSSSVKRKRV) has biased composition (basic residues). Over residues 433-445 (QLPSSPAQFSCRS) the composition is skewed to polar residues. The segment covering 565–583 (KSTQDKGTTSKISNSSEGE) has biased composition (polar residues). BRCT domains follow at residues 646–736 (SGKG…SFEL) and 757–839 (YRGT…NYLL).

As to quaternary structure, interacts with CDC27 and maybe other components of the APC/C complex. Interacts with histone variant H2AX under DNA damage conditions.

The protein resides in the cytoplasm. The protein localises to the cytoskeleton. Its subcellular location is the microtubule organizing center. It is found in the centrosome. In terms of biological role, implicated in chromosome condensation and DNA damage induced cellular responses. May play a role in neurogenesis and regulation of the size of the cerebral cortex. The polypeptide is Microcephalin (Colobus guereza (Mantled guereza)).